The chain runs to 158 residues: NADH-quinone oxidoreductase subunit B (158 aa).

Cysteine 37, cysteine 38, cysteine 102, and cysteine 132 together coordinate [4Fe-4S] cluster.

It belongs to the complex I 20 kDa subunit family. In terms of assembly, NDH-1 is composed of 14 different subunits. Subunits NuoB, C, D, E, F, and G constitute the peripheral sector of the complex. It depends on [4Fe-4S] cluster as a cofactor.

Its subcellular location is the cell inner membrane. The catalysed reaction is a quinone + NADH + 5 H(+)(in) = a quinol + NAD(+) + 4 H(+)(out). Functionally, NDH-1 shuttles electrons from NADH, via FMN and iron-sulfur (Fe-S) centers, to quinones in the respiratory chain. Couples the redox reaction to proton translocation (for every two electrons transferred, four hydrogen ions are translocated across the cytoplasmic membrane), and thus conserves the redox energy in a proton gradient. This chain is NADH-quinone oxidoreductase subunit B, found in Bordetella parapertussis (strain 12822 / ATCC BAA-587 / NCTC 13253).